The chain runs to 140 residues: Ubiquitin-like protein ATG12 (140 aa).

The disordered stretch occupies residues 1 to 50 (MAEEPQSVLQLPTSIAAGGEGLTDVSPETTTPEPPSSAAVSPGTEEPAGD). Over residues 25 to 42 (VSPETTTPEPPSSAAVSP) the composition is skewed to low complexity. Gly140 is covalently cross-linked (Glycyl lysine isopeptide (Gly-Lys) (interchain with K-130 in ATG5)).

This sequence belongs to the ATG12 family. In terms of assembly, forms a conjugate with ATG5. Part of the minor complex composed of 4 sets of ATG12-ATG5 and ATG16L1 (400 kDa); this complex interacts with ATG3 leading to disruption of ATG7 interaction and promotion of ATG8-like proteins lipidation. Forms an 800-kDa complex composed of ATG12-ATG5 and ATG16L2. Interacts with DHX58/RIG-1, IFIH1/MDA5 and MAVS/IPS-1 in monomeric form as well as in ATG12-ATG5 conjugate. The interaction with MAVS is further enhanced upon vesicular stomatitis virus (VSV) infection. Interacts with ATG3; this interaction is essential for phosphatidylethanolamine (PE)-conjugated ATG8-like proteins formation. Interacts with ATG7. Interacts with ATG10. The ATG12-ATG5 conjugate interacts with RAB33A; this interaction is bridged by ATG16L1 and promotes ATG12-ATG5-ATG16L1 complex recruitment to phagophores. Interacts with TECPR1. Interacts with SH3BGRL. The ATG12-ATG5 conjugate interacts with PDCD6IP (via the BRO1 domain); this interaction is bridged by ATG12 and promotes multiple PDCD6IP-mediated functions such as endolysosomal trafficking, macroautophagy and exosome biogenesis. Post-translationally, acetylated by EP300. In terms of tissue distribution, ubiquitous.

Its subcellular location is the cytoplasm. The protein localises to the preautophagosomal structure membrane. Functionally, ubiquitin-like protein involved in autophagy vesicles formation. Conjugation with ATG5 through a ubiquitin-like conjugating system involving also ATG7 as an E1-like activating enzyme and ATG10 as an E2-like conjugating enzyme, is essential for its function. The ATG12-ATG5 conjugate acts as an E3-like enzyme which is required for lipidation of ATG8 family proteins and their association to the vesicle membranes. As part of the ATG8 conjugation system with ATG5 and ATG16L1, required for recruitment of LRRK2 to stressed lysosomes and induction of LRRK2 kinase activity in response to lysosomal stress. Its function is as follows. (Microbial infection) May act as a proviral factor. In association with ATG5, negatively regulates the innate antiviral immune response by impairing the type I IFN production pathway upon vesicular stomatitis virus (VSV) infection. Required for the translation of incoming hepatitis C virus (HCV) RNA and, thereby, for the initiation of HCV replication, but not required once infection is established. This is Ubiquitin-like protein ATG12 from Homo sapiens (Human).